Here is a 188-residue protein sequence, read N- to C-terminus: Elongation factor P (188 aa).

The protein belongs to the elongation factor P family.

The protein localises to the cytoplasm. Its pathway is protein biosynthesis; polypeptide chain elongation. In terms of biological role, involved in peptide bond synthesis. Stimulates efficient translation and peptide-bond synthesis on native or reconstituted 70S ribosomes in vitro. Probably functions indirectly by altering the affinity of the ribosome for aminoacyl-tRNA, thus increasing their reactivity as acceptors for peptidyl transferase. This Rickettsia conorii (strain ATCC VR-613 / Malish 7) protein is Elongation factor P (efp).